Here is a 68-residue protein sequence, read N- to C-terminus: Conotoxin Eb11.7 (68 aa).

The N-terminal stretch at Met1 to Thr26 is a signal peptide. Cystine bridges form between Cys29–Cys43, Cys36–Cys48, Cys42–Cys52, and Cys47–Cys56. At Phe60 the chain carries Phenylalanine amide. A propeptide spanning residues Ala64–Glu68 is cleaved from the precursor.

It belongs to the conotoxin I2 superfamily. Expressed by the venom duct.

The protein localises to the secreted. This chain is Conotoxin Eb11.7, found in Conus eburneus (Ivory cone).